The chain runs to 909 residues: Myb-like protein Q (909 aa).

Disordered stretches follow at residues 15–65 (TTNN…QQQQ), 84–149 (QQQN…QQIL), and 216–280 (SAPS…KGPW). Residues 17 to 46 (NNNSNNNNNNNNNNNNNNNNNNNNNINQNH) show a composition bias toward low complexity. Basic residues predominate over residues 47-56 (QHQHQHHHHQ). Over residues 84-126 (QQQNYGESTTSTSMIPPSITTSLTPLTPTLSSQPQNIQQQQQQ) the composition is skewed to low complexity. The segment covering 127–139 (QHHHQQQHHHHHQ) has biased composition (basic residues). A compositionally biased stretch (polar residues) spans 216–226 (SAPSTPLSMSP). 2 consecutive HTH myb-type domains span residues 272 to 327 (SPGI…SPEV) and 328 to 378 (RKTN…LKKI). DNA-binding regions (H-T-H motif) lie at residues 300–323 (WSSIAAKIPGRIGKQCRERWFNHL) and 351–374 (WTAISKMLDGRPANAIKNHWNSTL). Basic and acidic residues predominate over residues 379-389 (GGDSKSLNKEK). Disordered stretches follow at residues 379–482 (GGDS…NTAI), 497–531 (QTTPNSSPSLSSKKTHDKQKVPQSPKNSKQQQTQQ), 616–642 (SMEQHHYQQQQQAQQQQHQQQQHQQQQ), 672–748 (YQQQ…HPIE), and 826–855 (LNTTTTTTNNNNNNNNNNNNNNNNNNIPTP). Positions 390-401 (DDDDDDDEDAED) are enriched in acidic residues. Low complexity-rich tracts occupy residues 415-431 (SSSSTTTTTTTTTTNSS) and 444-482 (STTTSTNNLNNSTNSTNSINNNNNNNNNNNNSSNTNTAI). The segment covering 497–508 (QTTPNSSPSLSS) has biased composition (polar residues). 4 stretches are compositionally biased toward low complexity: residues 622–642 (YQQQQQAQQQQHQQQQHQQQQ), 672–726 (YQQQ…QQQQ), 733–744 (NSNNTDTTFSNS), and 826–851 (LNTTTTTTNNNNNNNNNNNNNNNNNN).

The protein localises to the nucleus. The protein is Myb-like protein Q (mybQ) of Dictyostelium discoideum (Social amoeba).